Here is a 260-residue protein sequence, read N- to C-terminus: MASSGVTRRDPLANKVAIVTASTDGIGLAIARRLAQDGAHVVISSRKQQNVDRAVAALQAEGLSVTGTVCHVGKAEDRERLVATALNLHGGIDILVSNAAVNPFFGKLMDVTEEVWDKILDINVKAMALMTKAVVPEMEKRGGGSVVIVASIAAFNPFSGLGPYNVSKTALVGLTKNLALELAAQNIRVNCLAPGLIKTSFSKALWEDKAQEENIIQKLRIRRLGKPEECAGIVSFLCSEDASYITGETVVVAGGAPSRL.

18 to 42 (IVTASTDGIGLAIARRLAQDGAHVV) is an NADP(+) binding site. At Lys-74 the chain carries N6-acetyllysine; alternate. Lys-74 bears the N6-succinyllysine; alternate mark. Ser-151 is a binding site for substrate. Catalysis depends on Tyr-164, which acts as the Proton acceptor. Position 168 (Lys-168) interacts with NADP(+). N6-acetyllysine; alternate is present on Lys-198. Lys-198 carries the post-translational modification N6-succinyllysine; alternate. Ser-202 carries the phosphoserine modification. Position 209 is an N6-succinyllysine (Lys-209). The Peroxisomal targeting signal signature appears at 258–260 (SRL).

This sequence belongs to the short-chain dehydrogenases/reductases (SDR) family. Homotetramer. Detected in liver and kidney. Detected at lower levels in heart, lung, spleen, small intestine, testis, brain and stomach.

The protein localises to the peroxisome. The enzyme catalyses a secondary alcohol + NADP(+) = a ketone + NADPH + H(+). It catalyses the reaction 3alpha-hydroxy-5beta-pregnan-20-one + NADP(+) = 5beta-pregnan-3,20-dione + NADPH + H(+). It carries out the reaction 5beta-dihydrotestosterone + NADPH + H(+) = 5beta-androstane-3alpha,17beta-diol + NADP(+). The catalysed reaction is all-trans-retinol + NADP(+) = all-trans-retinal + NADPH + H(+). The enzyme catalyses isatin + NADPH + H(+) = 3-hydroxyindolin-2-one + NADP(+). Its activity is regulated as follows. Inhibited by flavonoids (kaempferol, quercetin, quercitrin, genistein), myristic acid, pyrazole, barbital, phenobarbital and CuSO4. NADPH-dependent oxidoreductase which catalyzes the reduction of a variety of compounds bearing carbonyl groups including ketosteroids, alpha-dicarbonyl compounds, aldehydes, aromatic ketones and quinones. Reduces all-trans-retinal and 9-cis retinal. Reduces 3-ketosteroids and benzil into 3alpha-hydroxysteroids and S-benzoin, respectively, in contrast to the stereoselectivity of primates DHRS4s which produce 3beta-hydroxysteroids and R-benzoin. In the reverse reaction, catalyze the NADP-dependent oxidation of 3alpha-hydroxysteroids and alcohol, but with much lower efficiency. Involved in the metabolism of 3alpha-hydroxysteroids, retinoid, isatin and xenobiotic carbonyl compounds. The sequence is that of Dehydrogenase/reductase SDR family member 4 (DHRS4) from Oryctolagus cuniculus (Rabbit).